The sequence spans 156 residues: ATP synthase subunit b (156 aa).

The helical transmembrane segment at 13–33 (AFIIFVWFCMKFVWPPLMNAI) threads the bilayer.

It belongs to the ATPase B chain family. As to quaternary structure, F-type ATPases have 2 components, F(1) - the catalytic core - and F(0) - the membrane proton channel. F(1) has five subunits: alpha(3), beta(3), gamma(1), delta(1), epsilon(1). F(0) has three main subunits: a(1), b(2) and c(10-14). The alpha and beta chains form an alternating ring which encloses part of the gamma chain. F(1) is attached to F(0) by a central stalk formed by the gamma and epsilon chains, while a peripheral stalk is formed by the delta and b chains.

It localises to the cell inner membrane. Functionally, f(1)F(0) ATP synthase produces ATP from ADP in the presence of a proton or sodium gradient. F-type ATPases consist of two structural domains, F(1) containing the extramembraneous catalytic core and F(0) containing the membrane proton channel, linked together by a central stalk and a peripheral stalk. During catalysis, ATP synthesis in the catalytic domain of F(1) is coupled via a rotary mechanism of the central stalk subunits to proton translocation. Its function is as follows. Component of the F(0) channel, it forms part of the peripheral stalk, linking F(1) to F(0). The polypeptide is ATP synthase subunit b (Shewanella sediminis (strain HAW-EB3)).